We begin with the raw amino-acid sequence, 940 residues long: MMEGLLWILLSVIIASVHGSRLKTPALPIQPEREPMISKGLSGCSFGGRFYSLEDTWHPDLGEPFGVMHCVMCHCEPQRSRRGKVFGKVSCRNMKQDCPDPTCDDPVLLPGHCCKTCPKGDSGRKEVESLFDFFQEKDDDLHKSYNDRSYISSEDTSTRDSTTTDFVALLTGVTDSWLPSSSGVARARFTLSRTSLTFSITFQRINRPSLIAFLDTDGNTAFEFRVPQADNDMICGIWKNVPKPHMRQLEAEQLHVSMTTADNRKEELQGRIIKHRALFAETFSAILTSDEVHSGMGGIAMLTLSDTENNLHFILIMQGLVPPGSSKVPVRVKLQYRQHLLREIRANITADDSDFAEVLADLNSRELFWLSRGQLQISVQTEGQTLRHISGFISGRRSCDTLQSVLSSGAALTAGQTGGVGSAVFTLHPNGSLDYQLLVAGLSSAVLSVSIEMKPRRRNKRSVLYELSAVFTDQRAAGSCGRVEARHTHMLLQNELFINIATALQPDGELRGQIRLLPYNGLDARRNELPVPLAGVLVSPPVRTGAAGHAWVSVDPQCHLHYEIIVNGLSKSEDASISAHLHGLAEIGEMDDSSTNHKRLLTGFYGQQAQGVLKDISVELLRHLNEGTAYLQVSTKMNPRGEIRGRIHVPNHCESPAPRAEFLEEPEFEDLLFTREPTELRKDTHTHVHSCFFEGEQHTHGSQWTPQYNTCFTCTCQKKTVICDPVMCPTLSCTHTVQPEDQCCPICEEKKESKETAAVEKVEENPEGCYFEGDQKMHAPGTTWHPFVPPFGYIKCAVCTCKGSTGEVHCEKVTCPPLTCSRPIRRNPSDCCKECPPEETPPLEDEEMMQADGTRLCKFGKNYYQNSEHWHPSVPLVGEMKCITCWCDHGVTKCQRKQCPLLSCRNPIRTEGKCCPECIEDFMEKEEMAKMAEKKKSWRH.

Positions 1 to 19 (MMEGLLWILLSVIIASVHG) are cleaved as a signal peptide. The VWFC 1 domain occupies 42-118 (SGCSFGGRFY…LPGHCCKTCP (77 aa)). 4 consecutive CHRD domains span residues 162 to 277 (TTTD…KHRA), 279 to 398 (FAET…GRRS), 404 to 519 (SVLS…LLPY), and 525 to 652 (RRNE…VPNH). N-linked (GlcNAc...) asparagine glycosylation is found at Asn-347 and Asn-430. VWFC domains are found at residues 689 to 748 (HSCF…PICE), 767 to 836 (EGCY…KECP), and 855 to 919 (RLCK…PECI).

It belongs to the chordin family. Interacts with twsg1 and/or bmp4. Post-translationally, cleaved by tolloid proteases; cleavage participates in dorsoventral patterning during early development.

The protein resides in the secreted. In terms of biological role, dorsalizing factor. Key developmental protein that dorsalizes early vertebrate embryonic tissues by binding to ventralizing TGF-beta family bone morphogenetic proteins (BMPs) and sequestering them in latent complexes. The chain is Chordin (chd) from Danio rerio (Zebrafish).